The chain runs to 207 residues: LexA repressor (207 aa).

Residues 28–48 (RAEIAQKLGFKSANAAEEHLK) constitute a DNA-binding region (H-T-H motif). Active-site for autocatalytic cleavage activity residues include Ser124 and Lys161.

This sequence belongs to the peptidase S24 family. Homodimer.

It catalyses the reaction Hydrolysis of Ala-|-Gly bond in repressor LexA.. Its function is as follows. Represses a number of genes involved in the response to DNA damage (SOS response), including recA and lexA. In the presence of single-stranded DNA, RecA interacts with LexA causing an autocatalytic cleavage which disrupts the DNA-binding part of LexA, leading to derepression of the SOS regulon and eventually DNA repair. The chain is LexA repressor from Aeromonas salmonicida (strain A449).